A 63-amino-acid chain; its full sequence is ATP synthase F(0) complex subunit 8 (63 aa).

A helical transmembrane segment spans residues 8–24; that stretch reads TWFLTILSVMLTLFTLL. Lys57 carries the post-translational modification N6-acetyllysine.

This sequence belongs to the ATPase protein 8 family. In terms of assembly, component of the ATP synthase complex composed at least of ATP5F1A/subunit alpha, ATP5F1B/subunit beta, ATP5MC1/subunit c (homooctomer), MT-ATP6/subunit a, MT-ATP8/subunit 8, ATP5ME/subunit e, ATP5MF/subunit f, ATP5MG/subunit g, ATP5MK/subunit k, ATP5MJ/subunit j, ATP5F1C/subunit gamma, ATP5F1D/subunit delta, ATP5F1E/subunit epsilon, ATP5PF/subunit F6, ATP5PB/subunit b, ATP5PD/subunit d, ATP5PO/subunit OSCP. ATP synthase complex consists of a soluble F(1) head domain (subunits alpha(3) and beta(3)) - the catalytic core - and a membrane F(0) domain - the membrane proton channel (subunits c, a, 8, e, f, g, k and j). These two domains are linked by a central stalk (subunits gamma, delta, and epsilon) rotating inside the F1 region and a stationary peripheral stalk (subunits F6, b, d, and OSCP). Interacts with PRICKLE3.

Its subcellular location is the mitochondrion membrane. Functionally, subunit 8, of the mitochondrial membrane ATP synthase complex (F(1)F(0) ATP synthase or Complex V) that produces ATP from ADP in the presence of a proton gradient across the membrane which is generated by electron transport complexes of the respiratory chain. ATP synthase complex consist of a soluble F(1) head domain - the catalytic core - and a membrane F(1) domain - the membrane proton channel. These two domains are linked by a central stalk rotating inside the F(1) region and a stationary peripheral stalk. During catalysis, ATP synthesis in the catalytic domain of F(1) is coupled via a rotary mechanism of the central stalk subunits to proton translocation. In vivo, can only synthesize ATP although its ATP hydrolase activity can be activated artificially in vitro. Part of the complex F(0) domain. The protein is ATP synthase F(0) complex subunit 8 of Physeter macrocephalus (Sperm whale).